The primary structure comprises 265 residues: Endochitinase At2g43580 (265 aa).

An N-terminal signal peptide occupies residues 1–24; sequence MALTKIFLILLLSLLGLYSETVKS. The Chitin-binding type-1 domain occupies 25–59; that stretch reads QNCDCAPNLCCSQFGYCGTTADYCGSTCQSGPCRV. Disulfide bonds link cysteine 27–cysteine 35, cysteine 29–cysteine 41, cysteine 34–cysteine 48, and cysteine 52–cysteine 57. The tract at residues 67 to 265 is catalytic; the sequence is GLVGNIVTQI…GLDPGANITC (199 aa). Asparagine 102 carries an N-linked (GlcNAc...) asparagine glycan. The active-site Proton donor is glutamate 129. N-linked (GlcNAc...) asparagine glycosylation is present at asparagine 262.

It belongs to the glycosyl hydrolase 19 family. Chitinase class I subfamily.

The catalysed reaction is Random endo-hydrolysis of N-acetyl-beta-D-glucosaminide (1-&gt;4)-beta-linkages in chitin and chitodextrins.. The sequence is that of Endochitinase At2g43580 from Arabidopsis thaliana (Mouse-ear cress).